We begin with the raw amino-acid sequence, 124 residues long: Heat-labile enterotoxin B chain (124 aa).

The N-terminal stretch at 1–21 (MNKVKCYVLFTALLSSLYAHG) is a signal peptide. Cysteine 30 and cysteine 107 are disulfide-bonded.

As to quaternary structure, heterohexamer of one A chain and of five B chains.

Its function is as follows. The biological activity of the toxin is produced by the A chain, which activates intracellular adenyl cyclase. This chain is Heat-labile enterotoxin B chain (eltB), found in Escherichia coli.